The chain runs to 739 residues: Lysyl oxidase homolog 3A (739 aa).

Positions 1–25 are cleaved as a signal peptide; it reads MLRSELRDMVVAMVLWGILLPFCLS. 4 SRCR domains span residues 38–139, 166–272, 293–393, and 403–511; these read FRLA…VICK, LRPL…VSCV, MRLK…VICN, and MRLT…VICS. 12 cysteine pairs are disulfide-bonded: Cys-64/Cys-128, Cys-77/Cys-138, Cys-108/Cys-118, Cys-196/Cys-261, Cys-209/Cys-271, Cys-238/Cys-248, Cys-318/Cys-382, Cys-331/Cys-392, Cys-362/Cys-372, Cys-433/Cys-497, Cys-446/Cys-510, and Cys-479/Cys-489. Asn-256 carries N-linked (GlcNAc...) asparagine glycosylation. An N-linked (GlcNAc...) asparagine glycan is attached at Asn-468. N-linked (GlcNAc...) asparagine glycosylation occurs at Asn-611. Residues 620 to 656 constitute a cross-link (lysine tyrosylquinone (Lys-Tyr)); the sequence is KASFCLEDTECHEGVSKRYECANFGEQGITVGCWDLY. At Tyr-656 the chain carries 2',4',5'-topaquinone.

The protein belongs to the lysyl oxidase family. Cu cation serves as cofactor. Requires lysine tyrosylquinone residue as cofactor. The lysine tyrosylquinone cross-link (LTQ) is generated by condensation of the epsilon-amino group of a lysine with a topaquinone produced by oxidation of tyrosine.

The protein resides in the secreted. Its subcellular location is the extracellular space. It is found in the cytoplasm. It localises to the nucleus. The enzyme catalyses L-lysyl-[protein] + O2 + H2O = (S)-2-amino-6-oxohexanoyl-[protein] + H2O2 + NH4(+). It catalyses the reaction N(6)-acetyl-L-lysyl-[protein] + O2 + H2O = acetamide + (S)-2-amino-6-oxohexanoyl-[protein] + H2O2. In terms of biological role, protein-lysine 6-oxidase that mediates the oxidation of peptidyl lysine residues to allysine in target proteins. Catalyzes the post-translational oxidative deamination of peptidyl lysine residues in precursors of elastin and different types of collagens, a prerequisite in the formation of cross-links between collagens and elastin. Can mediate oxidation of lysine residues that are acetylated. Also able to catalyze deacetylation of lysine residues. This chain is Lysyl oxidase homolog 3A, found in Danio rerio (Zebrafish).